We begin with the raw amino-acid sequence, 417 residues long: Peptide chain release factor subunit 1 (417 aa).

This sequence belongs to the eukaryotic release factor 1 family. As to quaternary structure, heterodimer of two subunits, one of which binds GTP.

It is found in the cytoplasm. Its function is as follows. Directs the termination of nascent peptide synthesis (translation) in response to the termination codons UAA, UAG and UGA. The sequence is that of Peptide chain release factor subunit 1 (prf1) from Thermoplasma acidophilum (strain ATCC 25905 / DSM 1728 / JCM 9062 / NBRC 15155 / AMRC-C165).